The sequence spans 489 residues: Acetylcholine receptor subunit beta (489 aa).

A signal peptide spans 1–20 (NSGALLWPLIWGLLLIGTQA). The Extracellular portion of the chain corresponds to 21–235 (LDKEAQLRDK…ITFYLVIQRK (215 aa)). N135 and N161 each carry an N-linked (GlcNAc...) asparagine glycan. A disulfide bond links C148 and C162. Transmembrane regions (helical) follow at residues 236–260 (PLFY…VFYL), 268–286 (MTLS…LLLA), and 302–323 (YLIF…VLNL). At 324–457 (HHRSPNTHHM…WQYVAMVVDR (134 aa)) the chain is on the cytoplasmic side. A helical membrane pass occupies residues 458-476 (LFLWTFIAFTSLGTLSIFL).

It belongs to the ligand-gated ion channel (TC 1.A.9) family. Acetylcholine receptor (TC 1.A.9.1) subfamily. Beta-1/CHRNB1 sub-subfamily. Pentamer of two alpha chains, and one each of the beta, delta, and gamma (in immature muscle) or epsilon (in mature muscle) chains.

The protein resides in the postsynaptic cell membrane. It is found in the cell membrane. It catalyses the reaction K(+)(in) = K(+)(out). The catalysed reaction is Na(+)(in) = Na(+)(out). Functionally, after binding acetylcholine, the AChR responds by an extensive change in conformation that affects all subunits and leads to opening of an ion-conducting channel across the plasma membrane. This chain is Acetylcholine receptor subunit beta (chrnb1), found in Xenopus laevis (African clawed frog).